We begin with the raw amino-acid sequence, 482 residues long: Aspartyl/glutamyl-tRNA(Asn/Gln) amidotransferase subunit B (482 aa).

This sequence belongs to the GatB/GatE family. GatB subfamily. Heterotrimer of A, B and C subunits.

It carries out the reaction L-glutamyl-tRNA(Gln) + L-glutamine + ATP + H2O = L-glutaminyl-tRNA(Gln) + L-glutamate + ADP + phosphate + H(+). The catalysed reaction is L-aspartyl-tRNA(Asn) + L-glutamine + ATP + H2O = L-asparaginyl-tRNA(Asn) + L-glutamate + ADP + phosphate + 2 H(+). Its function is as follows. Allows the formation of correctly charged Asn-tRNA(Asn) or Gln-tRNA(Gln) through the transamidation of misacylated Asp-tRNA(Asn) or Glu-tRNA(Gln) in organisms which lack either or both of asparaginyl-tRNA or glutaminyl-tRNA synthetases. The reaction takes place in the presence of glutamine and ATP through an activated phospho-Asp-tRNA(Asn) or phospho-Glu-tRNA(Gln). This is Aspartyl/glutamyl-tRNA(Asn/Gln) amidotransferase subunit B from Thermotoga petrophila (strain ATCC BAA-488 / DSM 13995 / JCM 10881 / RKU-1).